A 164-amino-acid polypeptide reads, in one-letter code: Putative 4-hydroxy-4-methyl-2-oxoglutarate aldolase (164 aa).

Substrate contacts are provided by residues 75–78 (GDML) and R97. D98 contributes to the a divalent metal cation binding site.

Belongs to the class II aldolase/RraA-like family. In terms of assembly, homotrimer. The cofactor is a divalent metal cation.

It catalyses the reaction 4-hydroxy-4-methyl-2-oxoglutarate = 2 pyruvate. The enzyme catalyses oxaloacetate + H(+) = pyruvate + CO2. Its function is as follows. Catalyzes the aldol cleavage of 4-hydroxy-4-methyl-2-oxoglutarate (HMG) into 2 molecules of pyruvate. Also contains a secondary oxaloacetate (OAA) decarboxylase activity due to the common pyruvate enolate transition state formed following C-C bond cleavage in the retro-aldol and decarboxylation reactions. The polypeptide is Putative 4-hydroxy-4-methyl-2-oxoglutarate aldolase (Hahella chejuensis (strain KCTC 2396)).